The sequence spans 435 residues: Pregnancy-specific beta-1-glycoprotein 6 (435 aa).

Positions 1 to 34 (MGPLSAPPCTQHITWKGLLLTASLLNFWNLPTTA) are cleaved as a signal peptide. The 109-residue stretch at 35-143 (QVIIEAKPPK…TGYFTVTLYS (109 aa)) folds into the Ig-like V-type domain. N-linked (GlcNAc...) asparagine glycosylation is found at asparagine 61, asparagine 103, and asparagine 110. The Cell attachment site motif lies at 126 to 128 (RGD). Ig-like C2-type domains follow at residues 148–233 (PSIS…VTLN), 241–326 (PYIT…VTLN), and 334–405 (PRIY…KEIS). Cystine bridges form between cysteine 168/cysteine 216, cysteine 261/cysteine 309, and cysteine 353/cysteine 393. N-linked (GlcNAc...) asparagine glycosylation is found at asparagine 198, asparagine 267, asparagine 302, and asparagine 386.

It belongs to the immunoglobulin superfamily. CEA family.

It localises to the secreted. This chain is Pregnancy-specific beta-1-glycoprotein 6 (PSG6), found in Homo sapiens (Human).